Consider the following 522-residue polypeptide: Sorting nexin-1 (522 aa).

2 disordered regions span residues 1–89 (MASG…QDLF) and 115–142 (SLPPQEAPNSSKHQPTYEELEEEEQEDQ). Phosphoserine is present on residues Ser32 and Ser39. Positions 35–45 (EAGDSDTEGED) are enriched in acidic residues. A phosphothreonine mark is found at Thr41 and Thr48. A phosphoserine mark is found at Ser58 and Ser72. The segment covering 60 to 73 (KRTTSLLPINNGSK) has biased composition (polar residues). Positions 132-142 (EELEEEEQEDQ) are enriched in acidic residues. In terms of domain architecture, PX spans 143 to 272 (FDLTVGITDP…EFLEKEELPR (130 aa)). Residues Arg186, Ser188, and Lys214 each coordinate a 1,2-diacyl-sn-glycero-3-phospho-(1D-myo-inositol-3-phosphate). Ser188 carries the phosphoserine modification. At Lys237 the chain carries N6-acetyllysine. Arg238 contacts a 1,2-diacyl-sn-glycero-3-phospho-(1D-myo-inositol-3-phosphate). Ser280 carries the post-translational modification Phosphoserine. Positions 281 to 298 (GAGLLKMFNKATDAVSKM) are membrane-binding amphipathic helix. Positions 302–522 (MNESDIWFEE…AFLPEAKAIS (221 aa)) constitute a BAR domain.

Belongs to the sorting nexin family. As to quaternary structure, predominantly forms heterodimers with BAR domain-containing sorting nexins SNX5, SNX6 and SNX32; can self-associate to form homodimers. The heterodimers are proposed to self-assemble into helical arrays on the membrane to stabilize and expand local membrane curvature underlying endosomal tubule formation. Thought to be a component of the originally described retromer complex (also called SNX-BAR retromer) which is a pentamer containing the heterotrimeric retromer cargo-selective complex (CSC), also described as vacuolar protein sorting subcomplex (VPS) and a heterodimeric membrane-deforming subcomplex formed between SNX1 or SNX2 and SNX5 or SNX6 (also called SNX-BAR subcomplex); the respective CSC and SNX-BAR subcomplexes associate with low affinity. Interacts with SNX5, SNX6, SNX32, VPS26A, VPS29, VPS35, DRD5, DENND5A, KALRN, RHOG (GDP-bound form). The interaction with SNX2 is reported controversially. Interacts with DNAJC13; prevented by presence of HGS. Interacts with HGS.

It localises to the endosome membrane. The protein resides in the golgi apparatus. The protein localises to the trans-Golgi network membrane. Its subcellular location is the early endosome membrane. It is found in the cell projection. It localises to the lamellipodium. Involved in several stages of intracellular trafficking. Interacts with membranes containing phosphatidylinositol 3-phosphate (PtdIns(3P)) or phosphatidylinositol 3,5-bisphosphate (PtdIns(3,5)P2). Acts in part as component of the retromer membrane-deforming SNX-BAR subcomplex. The SNX-BAR retromer mediates retrograde transport of cargo proteins from endosomes to the trans-Golgi network (TGN) and is involved in endosome-to-plasma membrane transport for cargo protein recycling. The SNX-BAR subcomplex functions to deform the donor membrane into a tubular profile called endosome-to-TGN transport carrier (ETC). Can sense membrane curvature and has in vitro vesicle-to-membrane remodeling activity. Involved in retrograde endosome-to-TGN transport of lysosomal enzyme receptors (IGF2R, M6PR and SORT1). Plays a role in targeting ligand-activated EGFR to the lysosomes for degradation after endocytosis from the cell surface and release from the Golgi. Involvement in retromer-independent endocytic trafficking of P2RY1 and lysosomal degradation of protease-activated receptor-1/F2R. Promotes KALRN- and RHOG-dependent but retromer-independent membrane remodeling such as lamellipodium formation; the function is dependent on GEF activity of KALRN. Required for endocytosis of DRD5 upon agonist stimulation but not for basal receptor trafficking. In Macaca fascicularis (Crab-eating macaque), this protein is Sorting nexin-1 (SNX1).